The primary structure comprises 380 residues: MTIMRKNHPLLKIINHSFIDLPTPSNISAWWNFGSLLGICLMVQIITGLFLAMHYTSDTTTAFSSVTHICRDVNYGWLIRYAHANGASMFFICLFIHVGRGIYYGSYMLNETWNIGIILLLTTMATAFVGYVLPWGQMSFWGATVITNLLSAIPYIGTTLVEWIWGGFSVDKATLTRFFAFHFILPFIITALVLVHLLFLHETGSNNPSGLNSDSDKIPFHPYYTIKDILGVLLLLMVLMFLVLFFPDVLGDPDNYTPANPLNTPAHIKPEWYFLFAYAILRSIPNKLGGVLALLLSILILAAFPLLNSSKQHGLIYRPITQTLYWIFVANLLILTWIGGQPVEYPFTTIGQISSIMYFMIIVIFMPMASMVENNILKFI.

The next 4 membrane-spanning stretches (helical) occupy residues 33-53 (FGSL…FLAM), 77-98 (WLIR…FIHV), 113-133 (WNIG…GYVL), and 178-198 (FFAF…VHLL). Heme b is bound by residues His83 and His97. Positions 182 and 196 each coordinate heme b. His201 contributes to the a ubiquinone binding site. 4 consecutive transmembrane segments (helical) span residues 226 to 246 (IKDI…VLFF), 288 to 308 (LGGV…PLLN), 320 to 340 (ITQT…WIGG), and 347 to 367 (FTTI…IFMP).

The protein belongs to the cytochrome b family. In terms of assembly, the cytochrome bc1 complex contains 11 subunits: 3 respiratory subunits (MT-CYB, CYC1 and UQCRFS1), 2 core proteins (UQCRC1 and UQCRC2) and 6 low-molecular weight proteins (UQCRH/QCR6, UQCRB/QCR7, UQCRQ/QCR8, UQCR10/QCR9, UQCR11/QCR10 and a cleavage product of UQCRFS1). This cytochrome bc1 complex then forms a dimer. Heme b serves as cofactor.

The protein localises to the mitochondrion inner membrane. Its function is as follows. Component of the ubiquinol-cytochrome c reductase complex (complex III or cytochrome b-c1 complex) that is part of the mitochondrial respiratory chain. The b-c1 complex mediates electron transfer from ubiquinol to cytochrome c. Contributes to the generation of a proton gradient across the mitochondrial membrane that is then used for ATP synthesis. This is Cytochrome b (MT-CYB) from Microryzomys minutus (Forest small rice rat).